An 814-amino-acid chain; its full sequence is Rho GTPase-activating protein 26 (814 aa).

Residues 7–262 (EFSDCCLDSP…MKENPLEHKT (256 aa)) enclose the BAR domain. The 105-residue stretch at 265-369 (PYTMEGYLYV…WMEAMDGREP (105 aa)) folds into the PH domain. Residues 383-568 (AQLDSIGFSI…ILIENHEKIF (186 aa)) form the Rho-GAP domain. Disordered stretches follow at residues 584 to 618 (SRKK…QRNS) and 638 to 696 (SSSL…SSDS). Low complexity-rich tracts occupy residues 591 to 600 (SKPPSCSKRP) and 638 to 661 (SSSL…SRPS). The segment covering 662–672 (SLPPNPSPTSP) has biased composition (pro residues). Residue Ser-668 is modified to Phosphoserine. Thr-670 is subject to Phosphothreonine. Ser-671 is subject to Phosphoserine. A compositionally biased stretch (low complexity) spans 673 to 696 (LSPSWPMFSAPSSPMPTSSTSSDS). An SH3 domain is found at 756–814 (TPFRKAKALYACQAEHDSELSFTAGTVFDNVHPSQEPGWLEGTLNGKTGLIPENYVEFL).

In terms of assembly, interacts with NYAP1, NYAP2 and MYO16. Interacts with MICAL1 and WDR44. Binds to the C-terminus of PTK2/FAK1. Post-translationally, phosphorylated in a PINK1-dependent fashion promoting retrograde mitochondrial trafficking and clustering.

Its subcellular location is the cell junction. It localises to the focal adhesion. The protein resides in the cytoplasm. The protein localises to the cytoskeleton. It is found in the endosome membrane. Its function is as follows. GTPase-activating protein for RHOA and CDC42. Facilitates mitochondrial quality control by promoting Parkin-mediated recruitment of autophagosomes to damaged mitochondria. Associates with MICAL1 on the endosomal membrane to promote Rab8-Rab10-dependent tubule extension. After dissociation of MICAL1, recruits WDR44 which connects the endoplasmic reticulum (ER) with the endosomal tubule, thereby participating in the export of a subset of neosynthesized proteins. The polypeptide is Rho GTPase-activating protein 26 (Arhgap26) (Mus musculus (Mouse)).